The following is a 503-amino-acid chain: Aromatase (503 aa).

Transmembrane regions (helical) follow at residues 19–39 (EVAP…LLVW), 51–71 (GYFL…MGIG), and 303–323 (MLIA…FLIA). Residues aspartate 309 and methionine 374 each contribute to the substrate site. Cysteine 437 lines the heme pocket.

The protein belongs to the cytochrome P450 family. Requires heme as cofactor.

The protein resides in the endoplasmic reticulum membrane. It localises to the microsome membrane. It carries out the reaction testosterone + 3 reduced [NADPH--hemoprotein reductase] + 3 O2 = 17beta-estradiol + formate + 3 oxidized [NADPH--hemoprotein reductase] + 4 H2O + 4 H(+). The catalysed reaction is androst-4-ene-3,17-dione + 3 reduced [NADPH--hemoprotein reductase] + 3 O2 = estrone + formate + 3 oxidized [NADPH--hemoprotein reductase] + 4 H2O + 4 H(+). It catalyses the reaction androst-4-ene-3,17-dione + reduced [NADPH--hemoprotein reductase] + O2 = 19-hydroxyandrost-4-ene-3,17-dione + oxidized [NADPH--hemoprotein reductase] + H2O + H(+). The enzyme catalyses 19-hydroxyandrost-4-ene-3,17-dione + reduced [NADPH--hemoprotein reductase] + O2 = 19-oxo-androst-4-ene-3,17-dione + oxidized [NADPH--hemoprotein reductase] + 2 H2O + H(+). It carries out the reaction 19-oxo-androst-4-ene-3,17-dione + reduced [NADPH--hemoprotein reductase] + O2 = estrone + formate + oxidized [NADPH--hemoprotein reductase] + H2O + 2 H(+). The catalysed reaction is estrone + reduced [NADPH--hemoprotein reductase] + O2 = 2-hydroxyestrone + oxidized [NADPH--hemoprotein reductase] + H2O + H(+). It catalyses the reaction 17beta-hydroxy-5alpha-androstan-3-one + reduced [NADPH--hemoprotein reductase] + O2 = 17beta,19-dihydroxy-3-oxo-5alpha-androstanone + oxidized [NADPH--hemoprotein reductase] + H2O + H(+). The enzyme catalyses 17beta,19-dihydroxy-3-oxo-5alpha-androstanone + reduced [NADPH--hemoprotein reductase] + O2 = 17beta-hydroxy-3,19-dioxo-5alpha-androstanone + oxidized [NADPH--hemoprotein reductase] + 2 H2O + H(+). It carries out the reaction 17beta-hydroxy-3,19-dioxo-5alpha-androstanone + reduced [NADPH--hemoprotein reductase] + O2 = 17beta-hydroxy-3-oxo-19-nor-5alpha-androst-1-ene + formate + oxidized [NADPH--hemoprotein reductase] + H2O + 2 H(+). It participates in steroid hormone biosynthesis. In terms of biological role, a cytochrome P450 monooxygenase that catalyzes the conversion of C19 androgens, androst-4-ene-3,17-dione (androstenedione) and testosterone to the C18 estrogens, estrone and estradiol, respectively. Catalyzes three successive oxidations of C19 androgens: two conventional oxidations at C19 yielding 19-hydroxy and 19-oxo/19-aldehyde derivatives, followed by a third oxidative aromatization step that involves C1-beta hydrogen abstraction combined with cleavage of the C10-C19 bond to yield a phenolic A ring and formic acid. Alternatively, the third oxidative reaction yields a 19-norsteroid and formic acid. Converts dihydrotestosterone to delta1,10-dehydro 19-nordihydrotestosterone and may play a role in homeostasis of this potent androgen. Also displays 2-hydroxylase activity toward estrone. Mechanistically, uses molecular oxygen inserting one oxygen atom into a substrate, and reducing the second into a water molecule, with two electrons provided by NADPH via cytochrome P450 reductase (CPR; NADPH-ferrihemoprotein reductase). The sequence is that of Aromatase (CYP19A1) from Leucopleurus acutus (Atlantic white-sided dolphin).